A 248-amino-acid chain; its full sequence is tRNA pseudouridine synthase A (248 aa).

Catalysis depends on Asp-52, which acts as the Nucleophile. Residue Tyr-113 coordinates substrate.

The protein belongs to the tRNA pseudouridine synthase TruA family. As to quaternary structure, homodimer.

The enzyme catalyses uridine(38/39/40) in tRNA = pseudouridine(38/39/40) in tRNA. Its function is as follows. Formation of pseudouridine at positions 38, 39 and 40 in the anticodon stem and loop of transfer RNAs. This Mesorhizobium japonicum (strain LMG 29417 / CECT 9101 / MAFF 303099) (Mesorhizobium loti (strain MAFF 303099)) protein is tRNA pseudouridine synthase A.